We begin with the raw amino-acid sequence, 611 residues long: Adenosylhomocysteinase 3 (611 aa).

Low complexity-rich tracts occupy residues 1–14, 40–57, and 68–78; these read MSVQ…AAKV, AMAP…APAA, and GPAAALSPAAG. Residues 1 to 184 are disordered; that stretch reads MSVQVVSAAA…KQQKNSKGNS (184 aa). Ser2 bears the N-acetylserine mark. The LISN domain, inhibits interaction with ITPR1 stretch occupies residues 2–109; that stretch reads SVQVVSAAAA…DGGEALVSPD (108 aa). Ser107 bears the Phosphoserine mark. Basic residues predominate over residues 135–144; it reads RPTKIGRRSL. Residues 145-164 are compositionally biased toward low complexity; it reads SRSISQSSTDSYSSAASYTD. Ser149, Ser152, Ser155, and Ser158 each carry phosphoserine. Positions 236, 310, and 335 each coordinate substrate. 336-338 is a binding site for NAD(+); that stretch reads SVT. 2 residues coordinate substrate: Lys365 and Asp369. NAD(+) contacts are provided by residues Asn370, 401–406, Glu422, Asn457, 478–479, and Asn525; these read GEVGKG and MG.

It belongs to the adenosylhomocysteinase family. As to quaternary structure, homotetramer. Forms heteromultimers with AHCYL1 (via the C-terminal region). Interacts with ITPR1; with lower affinity than AHCYL1 and maybe via ITPR1. Interacts with SLC4A4. Interacts with ZCCHC4. NAD(+) is required as a cofactor. In terms of processing, phosphorylated during neuronal differentiation at the LISN domain. Expressed in parotid and acinar cells (at protein level).

The protein resides in the cytoplasm. It is found in the microsome. The enzyme catalyses S-adenosyl-L-homocysteine + H2O = L-homocysteine + adenosine. It functions in the pathway amino-acid biosynthesis; L-homocysteine biosynthesis; L-homocysteine from S-adenosyl-L-homocysteine: step 1/1. Its function is as follows. May regulate the electrogenic sodium/bicarbonate cotransporter SLC4A4 activity and Mg(2+)-sensitivity. On the contrary of its homolog AHCYL1, does not regulate ITPR1 sensitivity to inositol 1,4,5-trisphosphate. The chain is Adenosylhomocysteinase 3 from Bos taurus (Bovine).